Consider the following 201-residue polypeptide: Adenylyl-sulfate kinase (201 aa).

ATP is bound at residue 35-42 (GLSGSGKS). Serine 109 functions as the Phosphoserine intermediate in the catalytic mechanism.

The protein belongs to the APS kinase family.

The enzyme catalyses adenosine 5'-phosphosulfate + ATP = 3'-phosphoadenylyl sulfate + ADP + H(+). It participates in sulfur metabolism; hydrogen sulfide biosynthesis; sulfite from sulfate: step 2/3. In terms of biological role, catalyzes the synthesis of activated sulfate. This Shigella boydii serotype 18 (strain CDC 3083-94 / BS512) protein is Adenylyl-sulfate kinase.